Reading from the N-terminus, the 534-residue chain is Glucans biosynthesis protein D (534 aa).

The tat-type signal signal peptide spans 1 to 30; that stretch reads MRMQRRHLLKNAAAALAALGLPALPQWALA.

This sequence belongs to the OpgD/OpgG family. Predicted to be exported by the Tat system. The position of the signal peptide cleavage has not been experimentally proven.

The protein resides in the periplasm. Its pathway is glycan metabolism; osmoregulated periplasmic glucan (OPG) biosynthesis. In terms of biological role, probably involved in the control of the structural glucose backbone of osmoregulated periplasmic glucans (OPGs). This Xanthomonas oryzae pv. oryzae (strain KACC10331 / KXO85) protein is Glucans biosynthesis protein D.